We begin with the raw amino-acid sequence, 120 residues long: MITKIDKNKVRMKRHARVRSKLAGTTERPRLNVYRSNKHIYAQVIDDVKGVTLAQASTQDKNLGLETTSNVEAAAKVGEAVAKLAVEKGVKAVVFDRGGYLFHGRVKALADAARENGLEF.

Belongs to the universal ribosomal protein uL18 family. In terms of assembly, part of the 50S ribosomal subunit; part of the 5S rRNA/L5/L18/L25 subcomplex. Contacts the 5S and 23S rRNAs.

Its function is as follows. This is one of the proteins that bind and probably mediate the attachment of the 5S RNA into the large ribosomal subunit, where it forms part of the central protuberance. This Macrococcus caseolyticus (strain JCSC5402) (Macrococcoides caseolyticum) protein is Large ribosomal subunit protein uL18.